The primary structure comprises 335 residues: Taste receptor type 2 member 119 (335 aa).

Over 1–7 the chain is Extracellular; sequence MMEGHIL. Residues 8–28 form a helical membrane-spanning segment; the sequence is FFFLVVMVQFVTGVLANGLIV. Residues 29–43 are Cytoplasmic-facing; sequence VVHAIDLIMWKKMAP. A helical transmembrane segment spans residues 44–64; the sequence is LDLLLFCLATSRIILQLCILF. At 65–81 the chain is on the extracellular side; it reads AQLCLFSLVRHTLFEDN. Asn81 carries an N-linked (GlcNAc...) asparagine glycan. A helical transmembrane segment spans residues 82–102; that stretch reads ITFVFIINELSLWFATWLGVF. Topologically, residues 103-124 are cytoplasmic; it reads YCAKIATIPHPLFLWLKMRISR. Residues 125-145 form a helical membrane-spanning segment; it reads LVPWLILGSVLYVIITTFIHS. Over 146-176 the chain is Extracellular; that stretch reads RETSAILKPIFISLFPKNATQVGTGHATLLS. N-linked (GlcNAc...) asparagine glycosylation is present at Asn163. The chain crosses the membrane as a helical span at residues 177–197; the sequence is VLVLGLTLPLFIFTVAVLLLI. The Cytoplasmic segment spans residues 198–224; it reads YSLWNYSRQMRTMVGTREYSGHAHISA. A helical membrane pass occupies residues 225–245; the sequence is MLSILSFLILYLSHYMVAVLI. The Extracellular portion of the chain corresponds to 246-256; it reads STQVLYLGSRT. Residues 257–277 traverse the membrane as a helical segment; it reads FVFCLLVIGMYPSIHSIVLIL. Over 278-335 the chain is Cytoplasmic; that stretch reads GNPKLKRNAKMFIVHCKCCHCTRAWVTSRSPRLSDLPVPPTHPSANKTSCSEACIMPS. Residues 308-327 form a disordered region; the sequence is PRLSDLPVPPTHPSANKTSC.

It belongs to the G-protein coupled receptor T2R family. Expressed in subsets of taste receptor cells of the tongue and palate epithelium and exclusively in gustducin-positive cells. Expressed in the duodenum, antrum and fundus (part of the stomach).

Its subcellular location is the membrane. Its function is as follows. Gustducin-coupled receptor implicated in the perception of bitter compounds in the oral cavity and the gastrointestinal tract. Signals through PLCB2 and the calcium-regulated cation channel TRPM5. This is Taste receptor type 2 member 119 (Tas2r119) from Rattus norvegicus (Rat).